The primary structure comprises 1018 residues: Thrombospondin type-1 domain-containing protein 4 (1018 aa).

The signal sequence occupies residues 1 to 25 (MVSHFMGSLSVLCFLLLLGFQFVCP). The 255-residue stretch at 53 to 307 (PGVWGAWGPW…YKLCNTNVCP (255 aa)) folds into the TSP type-1 1 domain. Disordered stretches follow at residues 111 to 235 (SVPL…RSGL), 254 to 279 (PAAS…ATQS), and 534 to 623 (SPQV…NWKQ). The segment covering 187–200 (QRLRRQKLSSRHSR) has biased composition (basic residues). A compositionally biased stretch (low complexity) spans 201-210 (SQGASSARHG). A compositionally biased stretch (polar residues) spans 259 to 279 (LFHSPETSNNHGVGTHGATQS). Basic and acidic residues-rich tracts occupy residues 556-577 (RSQE…RGEA) and 592-603 (RHPDRFSPHRPD). 5 consecutive TSP type-1 domains span residues 676–737 (CPAF…KICS), 739–792 (WQIR…DMGP), 793–851 (CAKS…GPCT), 852–911 (GKVE…HLKP), and 912–968 (CGAK…QDCV). The 38-residue stretch at 971–1008 (VDENCKDKYYNCNVVVQARLCVYNYYKTACCASCTRVA) folds into the PLAC domain.

As to quaternary structure, interacts with FBN1. May interact with TGFB1.

Its subcellular location is the secreted. The protein resides in the extracellular space. It localises to the extracellular matrix. Functionally, promotes FBN1 matrix assembly. Attenuates TGFB signaling, possibly by accelerating the sequestration of large latent complexes of TGFB or active TGFB by FBN1 microfibril assembly, thereby negatively regulating the expression of TGFB regulatory targets, such as POSTN. In Homo sapiens (Human), this protein is Thrombospondin type-1 domain-containing protein 4 (THSD4).